A 197-amino-acid polypeptide reads, in one-letter code: C-type lectin domain family 3 member A (197 aa).

The N-terminal stretch at 1–22 is a signal peptide; sequence MAKNGLVICILVITLLLDQTTS. 3 disulfide bridges follow: C68–C78, C95–C191, and C167–C183. One can recognise a C-type lectin domain in the interval 74-192; the sequence is VHKKCYLASE…CRSSKRYICE (119 aa).

As to expression, restricted to cartilage and breast. Also expressed in breast cancers.

The protein localises to the secreted. Functionally, promotes cell adhesion to laminin-332 and fibronectin. In Homo sapiens (Human), this protein is C-type lectin domain family 3 member A (CLEC3A).